The chain runs to 339 residues: MFKQLLAKCIEGYTLTEEEAYEAMMMIMSGEASASQIASFLSILRLRGETVDELTGLVKAMRNRMMTLDYEEEAIDTCGTGGDGASTFNISTAAAIVVSSLGVKVAKHGNRAVSSKSGSADVLEALHIDIQATPEEAKRALKTKGLAFLFAPLYHSAMKYAALPRKEIGFRTVFNLIGPLSNPARCKRQVIGVYSTQYAEKLAETLHRLGSEHVLLVTGKDGLDECSISAETDVVELKHGEIRRFTIAPEQYGLARGKLEHVQVRTVQQSAELLKAVLEGRANESAINIVILNAGVALYAAGKAATIREGVEMAKEAMMTKKAYEQFERLRMKEVEKYA.

5-phospho-alpha-D-ribose 1-diphosphate contacts are provided by residues Gly-79, Gly-82–Asp-83, Thr-87, Asn-89–Thr-92, Lys-107–Ser-115, and Ser-119. Gly-79 provides a ligand contact to anthranilate. Ser-91 contributes to the Mg(2+) binding site. Anthranilate is bound at residue Asn-110. An anthranilate-binding site is contributed by Arg-165. Residues Asp-224 and Glu-225 each coordinate Mg(2+).

It belongs to the anthranilate phosphoribosyltransferase family. As to quaternary structure, homodimer. Mg(2+) serves as cofactor.

It catalyses the reaction N-(5-phospho-beta-D-ribosyl)anthranilate + diphosphate = 5-phospho-alpha-D-ribose 1-diphosphate + anthranilate. The protein operates within amino-acid biosynthesis; L-tryptophan biosynthesis; L-tryptophan from chorismate: step 2/5. Its function is as follows. Catalyzes the transfer of the phosphoribosyl group of 5-phosphorylribose-1-pyrophosphate (PRPP) to anthranilate to yield N-(5'-phosphoribosyl)-anthranilate (PRA). This is Anthranilate phosphoribosyltransferase from Geobacillus sp. (strain WCH70).